The sequence spans 520 residues: Glucose-1-phosphate adenylyltransferase small subunit, chloroplastic (520 aa).

The transit peptide at 1-71 directs the protein to the chloroplast; the sequence is MATMAAIGSL…RTPSIVSPKA (71 aa). The tract at residues 1–81 is disordered; sequence MATMAAIGSL…VSDSQNSQTC (81 aa). Over residues 14 to 27 the composition is skewed to low complexity; it reads SSSSNHTRRLSSSS. Positions 28–51 are enriched in polar residues; it reads QRKTLSFSSSSLTGEKLNPTQEII.

This sequence belongs to the bacterial/plant glucose-1-phosphate adenylyltransferase family. As to quaternary structure, heterotetramer. Leaves.

Its subcellular location is the plastid. The protein resides in the chloroplast. It catalyses the reaction alpha-D-glucose 1-phosphate + ATP + H(+) = ADP-alpha-D-glucose + diphosphate. It participates in glycan biosynthesis; starch biosynthesis. With respect to regulation, activated by 3'phosphoglycerate, inhibited by orthophosphate. Allosteric regulation. Its function is as follows. This protein plays a role in synthesis of starch. It catalyzes the synthesis of the activated glycosyl donor, ADP-glucose from Glc-1-P and ATP. The polypeptide is Glucose-1-phosphate adenylyltransferase small subunit, chloroplastic (AGPS1) (Brassica napus (Rape)).